We begin with the raw amino-acid sequence, 250 residues long: 3-deoxy-manno-octulosonate cytidylyltransferase (250 aa).

Belongs to the KdsB family.

The protein resides in the cytoplasm. The enzyme catalyses 3-deoxy-alpha-D-manno-oct-2-ulosonate + CTP = CMP-3-deoxy-beta-D-manno-octulosonate + diphosphate. Its pathway is nucleotide-sugar biosynthesis; CMP-3-deoxy-D-manno-octulosonate biosynthesis; CMP-3-deoxy-D-manno-octulosonate from 3-deoxy-D-manno-octulosonate and CTP: step 1/1. It functions in the pathway bacterial outer membrane biogenesis; lipopolysaccharide biosynthesis. Activates KDO (a required 8-carbon sugar) for incorporation into bacterial lipopolysaccharide in Gram-negative bacteria. This chain is 3-deoxy-manno-octulosonate cytidylyltransferase, found in Syntrophobacter fumaroxidans (strain DSM 10017 / MPOB).